A 164-amino-acid chain; its full sequence is NADH-quinone oxidoreductase subunit I 2 (164 aa).

4Fe-4S ferredoxin-type domains follow at residues 39–71 and 81–110; these read IVLT…VVKA and ESFR…LTPD. Residues Cys-51, Cys-54, Cys-57, Cys-61, Cys-90, Cys-93, Cys-96, and Cys-100 each coordinate [4Fe-4S] cluster.

It belongs to the complex I 23 kDa subunit family. NDH-1 is composed of 14 different subunits. Subunits NuoA, H, J, K, L, M, N constitute the membrane sector of the complex. [4Fe-4S] cluster is required as a cofactor.

The protein resides in the cell inner membrane. It carries out the reaction a quinone + NADH + 5 H(+)(in) = a quinol + NAD(+) + 4 H(+)(out). In terms of biological role, NDH-1 shuttles electrons from NADH, via FMN and iron-sulfur (Fe-S) centers, to quinones in the respiratory chain. The immediate electron acceptor for the enzyme in this species is believed to be ubiquinone. Couples the redox reaction to proton translocation (for every two electrons transferred, four hydrogen ions are translocated across the cytoplasmic membrane), and thus conserves the redox energy in a proton gradient. The chain is NADH-quinone oxidoreductase subunit I 2 from Cereibacter sphaeroides (strain ATCC 17023 / DSM 158 / JCM 6121 / CCUG 31486 / LMG 2827 / NBRC 12203 / NCIMB 8253 / ATH 2.4.1.) (Rhodobacter sphaeroides).